Consider the following 449-residue polypeptide: 5'-deoxyadenosine deaminase (449 aa).

Zn(2+) is bound by residues histidine 79 and histidine 81. Glutamate 108 and histidine 200 together coordinate substrate. A Zn(2+)-binding site is contributed by histidine 227. The substrate site is built by glutamate 230 and aspartate 316. Aspartate 316 provides a ligand contact to Zn(2+).

This sequence belongs to the metallo-dependent hydrolases superfamily. MTA/SAH deaminase family. Homotetramer. Requires Zn(2+) as cofactor.

The enzyme catalyses 5'-deoxyadenosine + H2O + H(+) = 5'-deoxyinosine + NH4(+). It carries out the reaction S-adenosyl-L-homocysteine + H2O + H(+) = S-inosyl-L-homocysteine + NH4(+). The catalysed reaction is S-methyl-5'-thioadenosine + H2O + H(+) = S-methyl-5'-thioinosine + NH4(+). It catalyses the reaction adenosine + H2O + H(+) = inosine + NH4(+). It participates in amino-acid biosynthesis; S-adenosyl-L-methionine biosynthesis. In terms of biological role, catalyzes the deamination of three SAM-derived enzymatic products, namely 5'-deoxyadenosine, S-adenosyl-L-homocysteine, and 5'-methylthioadenosine, to produce the inosine analogs. Can also deaminate adenosine. The preferred substrate for this enzyme is 5'-deoxyadenosine, but all these substrates are efficiently deaminated. Likely functions in a S-adenosyl-L-methionine (SAM) recycling pathway from S-adenosyl-L-homocysteine (SAH) produced from SAM-dependent methylation reactions. May also be involved in the recycling of 5'-deoxyadenosine, whereupon the 5'-deoxyribose moiety of 5'-deoxyinosine is further metabolized to deoxyhexoses used for the biosynthesis of aromatic amino acids in methanogens. This Methanospirillum hungatei JF-1 (strain ATCC 27890 / DSM 864 / NBRC 100397 / JF-1) protein is 5'-deoxyadenosine deaminase.